Consider the following 126-residue polypeptide: Class I hydrophobin 1 (126 aa).

The first 16 residues, 1-16 (MQYMTIVAFLAATVAA), serve as a signal peptide directing secretion. 4 disulfides stabilise this stretch: cysteine 38–cysteine 100, cysteine 46–cysteine 94, cysteine 47–cysteine 75, and cysteine 101–cysteine 119.

Belongs to the fungal hydrophobin family.

The protein resides in the secreted. Its subcellular location is the cell wall. In terms of biological role, aerial growth, conidiation, and dispersal of filamentous fungi in the environment rely upon a capability of their secreting small amphipathic proteins called hydrophobins (HPBs) with low sequence identity. Class I can self-assemble into an outermost layer of rodlet bundles on aerial cell surfaces, conferring cellular hydrophobicity that supports fungal growth, development and dispersal; whereas Class II form highly ordered films at water-air interfaces through intermolecular interactions but contribute nothing to the rodlet structure. HYD1 and HYD2 are required for the structural integrity of the long aerial chains of microconidia. Does not seem to be important for the ability to cause seedling disease. The polypeptide is Class I hydrophobin 1 (Gibberella moniliformis (Maize ear and stalk rot fungus)).